Here is a 658-residue protein sequence, read N- to C-terminus: tRNA 5-methylaminomethyl-2-thiouridine biosynthesis bifunctional protein MnmC (658 aa).

The tract at residues 1–236 is tRNA (mnm(5)s(2)U34)-methyltransferase; sequence MIPELPHAQL…KWEVLRGEFL (236 aa). Positions 265 to 658 are FAD-dependent cmnm(5)s(2)U34 oxidoreductase; that stretch reads IGGGLAGCAS…ALRRLIRGKA (394 aa).

It in the N-terminal section; belongs to the methyltransferase superfamily. tRNA (mnm(5)s(2)U34)-methyltransferase family. This sequence in the C-terminal section; belongs to the DAO family. It depends on FAD as a cofactor.

The protein localises to the cytoplasm. The enzyme catalyses 5-aminomethyl-2-thiouridine(34) in tRNA + S-adenosyl-L-methionine = 5-methylaminomethyl-2-thiouridine(34) in tRNA + S-adenosyl-L-homocysteine + H(+). Functionally, catalyzes the last two steps in the biosynthesis of 5-methylaminomethyl-2-thiouridine (mnm(5)s(2)U) at the wobble position (U34) in tRNA. Catalyzes the FAD-dependent demodification of cmnm(5)s(2)U34 to nm(5)s(2)U34, followed by the transfer of a methyl group from S-adenosyl-L-methionine to nm(5)s(2)U34, to form mnm(5)s(2)U34. This is tRNA 5-methylaminomethyl-2-thiouridine biosynthesis bifunctional protein MnmC from Pseudomonas fluorescens (strain ATCC BAA-477 / NRRL B-23932 / Pf-5).